The chain runs to 307 residues: Homoserine kinase (307 aa).

95–105 provides a ligand contact to ATP; sequence PQSRGLGSSAS.

This sequence belongs to the GHMP kinase family. Homoserine kinase subfamily.

Its subcellular location is the cytoplasm. It catalyses the reaction L-homoserine + ATP = O-phospho-L-homoserine + ADP + H(+). It participates in amino-acid biosynthesis; L-threonine biosynthesis; L-threonine from L-aspartate: step 4/5. Its function is as follows. Catalyzes the ATP-dependent phosphorylation of L-homoserine to L-homoserine phosphate. This is Homoserine kinase from Corynebacterium aurimucosum (strain ATCC 700975 / DSM 44827 / CIP 107346 / CN-1) (Corynebacterium nigricans).